Reading from the N-terminus, the 543-residue chain is Acrosin-binding protein (543 aa).

An N-terminal signal peptide occupies residues 1-25 (MGQPAAGSILTLLRVLLLPLGPALA). Residues 26–106 (QDSPSAPTPG…ASWFESFCQF (81 aa)) are pro-ACR binding. A propeptide spans 26-276 (QDSPSAPTPG…DPHSFTARVR (251 aa)) (removed in mature form). Positions 187 to 239 (AGQEQAAGHKQEQGQEQHKQDPTQEHKQDDGQEQEEQEEEQEEEGKQEEGQSV) are disordered. Residues 193-216 (AGHKQEQGQEQHKQDPTQEHKQDD) are compositionally biased toward basic and acidic residues. Over residues 217–232 (GQEQEEQEEEQEEEGK) the composition is skewed to acidic residues. Positions 319–427 (LPHKEALLVL…TQAGTSESGR (109 aa)) are pro-ACR binding.

In terms of assembly, binds proacrosin (ACR). Does not bind the mature form of ACR. Post-translationally, the N-terminus is blocked. In terms of processing, phosphorylated on Tyr residues in capacitated sperm. Synthesized as a 60-kDa precursor, the 32-kDa mature form is post-translationally produced by the removal of the N-terminal half of the precursor during sperm maturation in the testis and/or epididymis. Specifically expressed in testis.

The protein localises to the secreted. It is found in the cytoplasmic vesicle. The protein resides in the secretory vesicle. Its subcellular location is the acrosome. Its function is as follows. Acrosomal protein that maintains proacrosin (pro-ACR) as an enzymatically inactive zymogen in the acrosome. Involved also in the acrosome formation. The sequence is that of Acrosin-binding protein (ACRBP) from Cavia porcellus (Guinea pig).